Here is a 486-residue protein sequence, read N- to C-terminus: Cardiolipin synthase A (486 aa).

2 helical membrane passes run 3-23 (TFYT…IASV) and 38-58 (MAWL…YLSF). PLD phosphodiesterase domains are found at residues 219 to 246 (MDLR…VDPR) and 399 to 426 (EGGL…DMRS). Residues histidine 224, lysine 226, aspartate 231, histidine 404, lysine 406, and aspartate 411 contribute to the active site.

Belongs to the phospholipase D family. Cardiolipin synthase subfamily. ClsA sub-subfamily.

It localises to the cell inner membrane. The catalysed reaction is 2 a 1,2-diacyl-sn-glycero-3-phospho-(1'-sn-glycerol) = a cardiolipin + glycerol. Functionally, catalyzes the reversible phosphatidyl group transfer from one phosphatidylglycerol molecule to another to form cardiolipin (CL) (diphosphatidylglycerol) and glycerol. The chain is Cardiolipin synthase A from Edwardsiella ictaluri (strain 93-146).